Consider the following 223-residue polypeptide: tRNA (guanine-N(7)-)-methyltransferase (223 aa).

S-adenosyl-L-methionine is bound by residues Asp56, Asp81, Asp108, and Asp130. Residue Asp130 is part of the active site. Substrate is bound by residues Lys134 and Asp166.

The protein belongs to the class I-like SAM-binding methyltransferase superfamily. TrmB family.

It catalyses the reaction guanosine(46) in tRNA + S-adenosyl-L-methionine = N(7)-methylguanosine(46) in tRNA + S-adenosyl-L-homocysteine. Its pathway is tRNA modification; N(7)-methylguanine-tRNA biosynthesis. Functionally, catalyzes the formation of N(7)-methylguanine at position 46 (m7G46) in tRNA. The protein is tRNA (guanine-N(7)-)-methyltransferase of Rubrobacter xylanophilus (strain DSM 9941 / JCM 11954 / NBRC 16129 / PRD-1).